We begin with the raw amino-acid sequence, 669 residues long: Exostosin-like 1 (669 aa).

The Cytoplasmic segment spans residues 1–8; it reads MLWRRKSF. Residues 9–29 traverse the membrane as a helical; Signal-anchor for type II membrane protein segment; sequence WLALSAFWLLLVLLGVFPLRL. Over 30–669 the chain is Lumenal; that stretch reads AVLPGPLPGR…RKKYRSLEKP (640 aa). 2 N-linked (GlcNAc...) asparagine glycosylation sites follow: asparagine 263 and asparagine 480. A disulfide bridge links cysteine 577 with cysteine 627. Residues 601-621 form a disordered region; that stretch reads RQHPEAVPMDSGDPRPVPEPQ.

The protein belongs to the glycosyltransferase 47 family.

It is found in the endoplasmic reticulum membrane. The catalysed reaction is 3-O-{[(1-&gt;4)-beta-D-GlcA-(1-&gt;4)-alpha-D-GlcNAc](n)-(1-&gt;4)-beta-D-GlcA-(1-&gt;3)-beta-D-Gal-(1-&gt;3)-beta-D-Gal-(1-&gt;4)-beta-D-Xyl}-L-seryl-[protein] + UDP-N-acetyl-alpha-D-glucosamine = 3-O-{alpha-D-GlcNAc-[(1-&gt;4)-beta-D-GlcA-(1-&gt;4)-alpha-D-GlcNAc](n)-(1-&gt;4)-beta-D-GlcA-(1-&gt;3)-beta-D-Gal-(1-&gt;3)-beta-D-Gal-(1-&gt;4)-beta-D-Xyl}-L-seryl-[protein] + UDP + H(+). The protein operates within protein modification; protein glycosylation. Glycosyltransferase required for the biosynthesis of heparan-sulfate (HS). Transfers N-acetyl-alpha-D-glucosamine to the nascent HS chain (GlcNAcT-II activity). Appears to lack GlcNAcT I and GlcAT-II activities. This is Exostosin-like 1 (Extl1) from Mus musculus (Mouse).